The following is a 466-amino-acid chain: F-box only protein 15 (466 aa).

Positions 27 to 73 constitute an F-box domain; it reads SASLDSLPSEVLLKILSYLDAAALLCAGCVNRRFYHLANDNFIWIRI.

As to quaternary structure, directly interacts with SKP1 and CUL1.

Substrate-recognition component of the SCF (SKP1-CUL1-F-box protein)-type E3 ubiquitin ligase complex. The sequence is that of F-box only protein 15 (FBXO15) from Bos taurus (Bovine).